A 1693-amino-acid chain; its full sequence is Non-structural polyprotein pORF1 (1693 aa).

An Alphavirus-like MT domain is found at 56–240 (VFRPEVFWNH…HDVSNLRSWI (185 aa)). Residues 60–240 (EVFWNHPIQR…HDVSNLRSWI (181 aa)) form a methyltransferase region. Positions 241 to 439 (RTTKVTGDHP…FYAQCRRWLS (199 aa)) are Y-domain. A disulfide bridge connects residues Cys434 and Cys481. Positions 442–509 (FHLDPRVLVF…EAYEGSDVDP (68 aa)) are putative protease. Positions 510–691 (AESAISDISG…FSPGHVWESA (182 aa)) are zinc-binding. Positions 671, 673, and 686 each coordinate Zn(2+). Residues 712–778 (SSPARPDLGL…AITHQTARHR (67 aa)) form a hinge region. The interval 737 to 769 (AVLLPPPAPDPPPPPSAPALDEPASGATAGAPA) is disordered. Residues 740-753 (LPPPAPDPPPPPSA) are compositionally biased toward pro residues. Residues 775–921 (ARHRRLLFTY…LYLPELAARW (147 aa)) enclose the Macro domain. Residues 785–942 (PDGSKVFAGS…TITEDVARTA (158 aa)) are X-domain. Residues 934–1082 (ITEDVARTAN…RPDLGPTSWW (149 aa)) enclose the (+)RNA virus helicase ATP-binding domain. Residues 960–1204 (GCRVTPGVVQ…ISDAIVNNFF (245 aa)) form an NTPase/helicase region. 975–982 (GVPGSGKS) provides a ligand contact to ATP. Positions 1083–1216 (HVTHRCPADV…GGEIGHQRPS (134 aa)) constitute a (+)RNA virus helicase C-terminal domain. The segment at 1207 to 1693 (GGEIGHQRPS…LTNSILCRVE (487 aa)) is RNA-directed RNA polymerase. A RdRp catalytic domain is found at 1454-1565 (SMVFENDFSE…LCSEYRQSPG (112 aa)).

It belongs to the hepevirus non-structural polyprotein family. In terms of assembly, the protease domain interacts with host EIF2AK4 (via C-terminus); this interaction inhibits dimerization of EIF2AK4 and prevents EIF2AK4-mediated phosphorylation of host EIF2A. Requires Mg(2+) as cofactor. In terms of processing, ORF1 polyprotein does not seem to be processed into distinct enzymatic domains by a viral protease belonging to ORF1, but could be processed by a host serine protease like thrombin.

It localises to the host cytoplasm. The protein localises to the host perinuclear region. It catalyses the reaction RNA(n) + a ribonucleoside 5'-triphosphate = RNA(n+1) + diphosphate. It carries out the reaction GTP + S-adenosyl-L-methionine = N(7)-methyl-GTP + S-adenosyl-L-homocysteine. Putative protease: Inhibited by chymostatin. Methyltransferase: Displays a capping enzyme activity. This function is necessary since all viral RNAs are synthesized in the cytoplasm, and host capping enzymes are restricted to the nucleus. The enzymatic reaction involves a covalent link between 7-methyl-GMP and the methyltransferase, whereas eukaryotic capping enzymes form a covalent complex only with GMP. Methyltransferase catalyzes transfer of a methyl group from S-adenosylmethionine to GTP and GDP to yield m(7)GTP or m(7)GDP. GDP is a better substrate than GTP. This enzyme also displays guanylyltransferase activity to form a covalent complex, methyltransferase-m(7)GMP, from which 7-methyl-GMP is transferred to the mRNA to create the cap structure. In terms of biological role, Y-domain: Indispensable for virus replication. Its function is as follows. Putative protease: The putative protease domain although necessary for replication of the virus may not be a protease but rather a structural Zn(2+)-binding domain. Inhibits induction of IFN-beta by MDA5 and RIG-I pathways and down-regulates the expression of MDA5. Functionally, NTPase/helicase: Multi-functional protein that exhibits NTPase and RNA unwinding activities. Hydrolyzes all NTPs efficiently and unwinds RNA duplexes containing 5' overhangs. Possesses a sequence independent RNA-5'-triphosphatase (RTPase) activity suggestive of its role in forming viral cap structure. Also participates in viral genome replication, RNA translocation and genome packaging/unpackaging. RNA-directed RNA polymerase: Plays an essential role in the virus replication. Binds to the 3'-end of the genomic RNA to initiate viral replication. The chain is Non-structural polyprotein pORF1 from Hepatitis E virus genotype 1 (isolate Human/Myanmar/HEVNE8L) (HEV-1).